The following is a 591-amino-acid chain: Aspartate--tRNA ligase (591 aa).

Glu-173 contacts L-aspartate. The segment at 197–200 is aspartate; sequence QLFK. An L-aspartate-binding site is contributed by Arg-219. Residues 219 to 221 and Gln-228 contribute to the ATP site; that span reads RDE. L-aspartate is bound at residue His-448. Glu-482 serves as a coordination point for ATP. Arg-489 is an L-aspartate binding site. ATP is bound at residue 534–537; sequence GLDR.

The protein belongs to the class-II aminoacyl-tRNA synthetase family. Type 1 subfamily. Homodimer.

Its subcellular location is the cytoplasm. The catalysed reaction is tRNA(Asp) + L-aspartate + ATP = L-aspartyl-tRNA(Asp) + AMP + diphosphate. Functionally, catalyzes the attachment of L-aspartate to tRNA(Asp) in a two-step reaction: L-aspartate is first activated by ATP to form Asp-AMP and then transferred to the acceptor end of tRNA(Asp). This chain is Aspartate--tRNA ligase, found in Shewanella amazonensis (strain ATCC BAA-1098 / SB2B).